The chain runs to 91 residues: DNA/RNA-binding protein Alba (91 aa).

Residue lysine 11 is modified to N6-acetyllysine.

It belongs to the histone-like Alba family. In terms of processing, acetylated. Acetylation at Lys-11 decreases DNA-binding affinity.

It localises to the cytoplasm. The protein resides in the chromosome. Its function is as follows. Binds double-stranded DNA tightly but without sequence specificity. Incubation with DNA in vitro gives fibrous structures 10.3 +/- 1.1 nm in thickness (naked DNA is 1.83 +/- 0.37 nm). This protein does not significantly compact DNA. This chain is DNA/RNA-binding protein Alba, found in Thermococcus kodakarensis (strain ATCC BAA-918 / JCM 12380 / KOD1) (Pyrococcus kodakaraensis (strain KOD1)).